A 245-amino-acid polypeptide reads, in one-letter code: Small ribosomal subunit protein uS3 (245 aa).

The 72-residue stretch at Leu21–Ala92 folds into the KH type-2 domain. Positions Glu215–Ala245 are disordered.

This sequence belongs to the universal ribosomal protein uS3 family.

The protein resides in the cytoplasm. It localises to the nucleus. Its subcellular location is the nucleolus. The protein localises to the mitochondrion inner membrane. It is found in the cytoskeleton. The protein resides in the spindle. It catalyses the reaction 2'-deoxyribonucleotide-(2'-deoxyribose 5'-phosphate)-2'-deoxyribonucleotide-DNA = a 3'-end 2'-deoxyribonucleotide-(2,3-dehydro-2,3-deoxyribose 5'-phosphate)-DNA + a 5'-end 5'-phospho-2'-deoxyribonucleoside-DNA + H(+). Functionally, component of the small ribosomal subunit. The ribosome is a large ribonucleoprotein complex responsible for the synthesis of proteins in the cell. Has endonuclease activity and plays a role in repair of damaged DNA. Also involved in other processes including regulation of transcription, translation of its cognate mRNA, spindle formation and chromosome movement during mitosis, and apoptosis. The sequence is that of Small ribosomal subunit protein uS3 (rps3) from Ictalurus punctatus (Channel catfish).